The primary structure comprises 150 residues: UPF0178 protein HCH_06960 (150 aa).

It belongs to the UPF0178 family.

In Hahella chejuensis (strain KCTC 2396), this protein is UPF0178 protein HCH_06960.